The sequence spans 795 residues: Protein translocase subunit SecA 2 (795 aa).

ATP is bound by residues Gln-84, 102-106, and Asp-496; that span reads GEGKT.

The protein belongs to the SecA family. Monomer and homodimer. Part of the essential Sec protein translocation apparatus which comprises SecA, SecYEG and auxiliary proteins SecDF. Other proteins may also be involved.

It localises to the cell membrane. Its subcellular location is the cytoplasm. The enzyme catalyses ATP + H2O + cellular proteinSide 1 = ADP + phosphate + cellular proteinSide 2.. In terms of biological role, part of the Sec protein translocase complex. Interacts with the SecYEG preprotein conducting channel. Has a central role in coupling the hydrolysis of ATP to the transfer of proteins into and across the cell membrane, serving as an ATP-driven molecular motor driving the stepwise translocation of polypeptide chains across the membrane. In Streptococcus agalactiae serotype III (strain NEM316), this protein is Protein translocase subunit SecA 2.